The primary structure comprises 313 residues: Putative glycosyltransferase ORF313 (313 aa).

This sequence belongs to the glycosyltransferase group 1 family. Glycosyltransferase 4 subfamily.

This chain is Putative glycosyltransferase ORF313, found in Acidianus hospitalis (AFV-1).